A 292-amino-acid polypeptide reads, in one-letter code: Polyisoprenoid diphosphate/phosphate phosphohydrolase PLPP6 (292 aa).

Disordered regions lie at residues 1–34 and 66–86; these read MPSP…SGGG and GSFP…PPED. The Cytoplasmic segment spans residues 1 to 131; the sequence is MPSPRRTIEG…SAWGSVRPLM (131 aa). Low complexity predominate over residues 10-25; it reads GRPLGSSGGSSVPGSP. Phosphoserine is present on residues Ser-24 and Ser-67. The span at 69–79 shows a compositional bias: low complexity; it reads PLAASGPAQAA. A helical transmembrane segment spans residues 132–152; sequence KLLEISGHGIPWLLGTLYCLL. At 153–161 the chain is on the lumenal side; the sequence is RSDSWAGRE. A helical membrane pass occupies residues 162 to 182; that stretch reads VLMNLLFALLLDLLLVAVIKG. The interval 181-189 is phosphatase sequence motif I; sequence KGLVRRRRP. Over 183 to 225 the chain is Cytoplasmic; that stretch reads LVRRRRPAHNQKDMFFTLSVDRYSFPSGHATRAALVSRFILNH. Residues 208–211 are phosphatase sequence motif II; that stretch reads PSGH. The active-site Proton donors is His-211. The helical transmembrane segment at 226 to 246 threads the bilayer; the sequence is LVLAIPLRVLVVLWAFVLGLS. Residues 246 to 257 are phosphatase sequence motif III; it reads SRVMLGRHNVTD. Over 247–257 the chain is Lumenal; sequence RVMLGRHNVTD. Catalysis depends on His-253, which acts as the Nucleophile. Residues 258 to 278 form a helical membrane-spanning segment; it reads VAFGFFLGYMQYSIVDYCWLS. The Cytoplasmic segment spans residues 279 to 292; it reads PHNVPVLFVLWNQQ.

It belongs to the PA-phosphatase related phosphoesterase family. Post-translationally, phosphorylation by PKC activates the phosphatase activity towards presqualene diphosphate.

It localises to the endoplasmic reticulum membrane. The protein localises to the nucleus envelope. The protein resides in the nucleus inner membrane. It carries out the reaction presqualene diphosphate + H2O = presqualene phosphate + phosphate + H(+). It catalyses the reaction presqualene phosphate + H2O = presqualene alcohol + phosphate. The catalysed reaction is (2E,6E)-farnesyl diphosphate + H2O = (2E,6E)-farnesyl phosphate + phosphate + H(+). The enzyme catalyses (2E,6E)-farnesyl phosphate + H2O = (2E,6E)-farnesol + phosphate. It carries out the reaction (2E,6E,10E)-geranylgeranyl diphosphate + H2O = (2E,6E,10E)-geranylgeranyl phosphate + phosphate + H(+). It catalyses the reaction (2E,6E,10E)-geranylgeranyl phosphate + H2O = (2E,6E,10E)-geranylgeraniol + phosphate. The catalysed reaction is (2E)-geranyl diphosphate + H2O = (2E)-geranyl phosphate + phosphate + H(+). The enzyme catalyses (2E)-geranyl phosphate + H2O = (2E)-geraniol + phosphate. It carries out the reaction 1,2-dihexadecanoyl-sn-glycero-3-phosphate + H2O = 1,2-dihexadecanoyl-sn-glycerol + phosphate. In terms of biological role, magnesium-independent polyisoprenoid diphosphatase that catalyzes the sequential dephosphorylation of presqualene, farnesyl, geranyl and geranylgeranyl diphosphates. Functions in the innate immune response through the dephosphorylation of presqualene diphosphate which acts as a potent inhibitor of the signaling pathways contributing to polymorphonuclear neutrophils activation. May regulate the biosynthesis of cholesterol and related sterols by dephosphorylating presqualene and farnesyl diphosphate, two key intermediates in this biosynthetic pathway. May also play a role in protein prenylation by acting on farnesyl diphosphate and its derivative geranylgeranyl diphosphate, two precursors for the addition of isoprenoid anchors to membrane proteins. Has a lower activity towards phosphatidic acid (PA), but through phosphatidic acid dephosphorylation may participate in the biosynthesis of phospholipids and triacylglycerols. May also act on ceramide-1-P, lysophosphatidic acid (LPA) and sphing-4-enine 1-phosphate/sphingosine-1-phosphate. This Mus musculus (Mouse) protein is Polyisoprenoid diphosphate/phosphate phosphohydrolase PLPP6.